The primary structure comprises 184 residues: dITP/XTP pyrophosphatase (184 aa).

7–12 (TSNPGK) contributes to the substrate binding site. Mg(2+)-binding residues include E36 and D65. Catalysis depends on D65, which acts as the Proton acceptor. Residues S66, 139-142 (FGFD), K162, and 167-168 (HR) each bind substrate.

The protein belongs to the HAM1 NTPase family. As to quaternary structure, homodimer. Mg(2+) is required as a cofactor.

The catalysed reaction is XTP + H2O = XMP + diphosphate + H(+). The enzyme catalyses dITP + H2O = dIMP + diphosphate + H(+). It catalyses the reaction ITP + H2O = IMP + diphosphate + H(+). Its function is as follows. Pyrophosphatase that catalyzes the hydrolysis of nucleoside triphosphates to their monophosphate derivatives, with a high preference for the non-canonical purine nucleotides XTP (xanthosine triphosphate), dITP (deoxyinosine triphosphate) and ITP. Seems to function as a house-cleaning enzyme that removes non-canonical purine nucleotides from the nucleotide pool, thus preventing their incorporation into DNA/RNA and avoiding chromosomal lesions. This is dITP/XTP pyrophosphatase from Thermococcus kodakarensis (strain ATCC BAA-918 / JCM 12380 / KOD1) (Pyrococcus kodakaraensis (strain KOD1)).